The sequence spans 440 residues: Protein CyaD (440 aa).

Over 1-55 the chain is Cytoplasmic; it reads MRRALRELAARHGRVLAASWRQRHRRPAGWFDPVETEFLPSALSLQERPISPTAR. The chain crosses the membrane as a helical span at residues 56–75; sequence WLARILMALAAGALVWSVVG. The Periplasmic portion of the chain corresponds to 76-440; that stretch reads KTEIVVHAAG…RHAGESLGER (365 aa).

This sequence belongs to the membrane fusion protein (MFP) (TC 8.A.1) family.

The protein localises to the cell inner membrane. In terms of biological role, cyaD is necessary for transport of calmodulin-sensitive adenylate cyclase-hemolysin (cyclolysin). In Bordetella pertussis (strain ATCC 9797 / DSM 5571 / CCUG 30873 / LMG 14455 / NCTC 10739 / 18323), this protein is Protein CyaD (cyaD).